The chain runs to 213 residues: MKALKVPEATITRLSVYSRFLERMDRNGIVTVSSGEIAEGVGVSSAQVRKDLAYFGEFGTRGVGYNVKDLMHYTSKILGLNEPWPIVLAGAGNLGFALCTYKGFNDRGFTIVGVFDNDLTKIGKKIVDLEVYPPERMPEVIAKHKVRIGIIAVPARAAQEVADQMVKNGLQAILNFAPVVLNVPDHVLLRNVDLSVSLEVLTFNLVQKESQAG.

A DNA-binding region (H-T-H motif) is located at residues 16 to 55 (VYSRFLERMDRNGIVTVSSGEIAEGVGVSSAQVRKDLAYF). 90–95 (GAGNLG) serves as a coordination point for NAD(+).

This sequence belongs to the transcriptional regulatory Rex family. In terms of assembly, homodimer.

The protein localises to the cytoplasm. Modulates transcription in response to changes in cellular NADH/NAD(+) redox state. The polypeptide is Redox-sensing transcriptional repressor Rex (Pelotomaculum thermopropionicum (strain DSM 13744 / JCM 10971 / SI)).